We begin with the raw amino-acid sequence, 35 residues long: UPF0387 membrane protein YohO (35 aa).

Residues isoleucine 6 to alanine 26 traverse the membrane as a helical segment.

The protein belongs to the UPF0387 family.

The protein resides in the cell inner membrane. This chain is UPF0387 membrane protein YohO, found in Salmonella paratyphi A (strain ATCC 9150 / SARB42).